A 540-amino-acid chain; its full sequence is Mitochondrial antiviral-signaling protein (540 aa).

Pro2 is subject to N-acetylproline. Over 2-513 (PFAEDKTYKY…REVPCHRPSP (512 aa)) the chain is Cytoplasmic. Glycyl lysine isopeptide (Lys-Gly) (interchain with G-Cter in ubiquitin) cross-links involve residues Lys7 and Lys10. The CARD domain maps to 10–77 (KYICRNFSNF…WVEYFIAALR (68 aa)). The interval 10 to 77 (KYICRNFSNF…WVEYFIAALR (68 aa)) is required for interaction with NLRX1. Cys79 is lipidated: S-palmitoyl cysteine. The tract at residues 95–297 (YQPRTSDRPP…EAPANSLPSK (203 aa)) is disordered. Positions 106–122 (PLEPPSLPAERPGPPTP) are enriched in pro residues. Positions 143 to 147 (PVQET) are interaction with TRAF2. Polar residues-rich tracts occupy residues 145–165 (QETQAPESPGENSEQALQTLS) and 179–216 (ESSSDLAALSPLTSSGHQEQDTELGSTHTAGATSSLTP). Ser152, Ser157, Ser165, Ser180, and Ser188 each carry phosphoserine. Residues 153-158 (PGENSE) are interaction with TRAF6. Thr215 bears the Phosphothreonine mark. Ser222 and Ser233 each carry phosphoserine. Thr234 bears the Phosphothreonine mark. Asymmetric dimethylarginine is present on Arg236. The span at 241–266 (PGPTGSVVSTGTSFSSSSPGLASAGA) shows a compositional bias: low complexity. Phosphoserine occurs at positions 253 and 258. Glycyl lysine isopeptide (Lys-Gly) (interchain with G-Cter in ubiquitin) cross-links involve residues Lys311 and Lys325. Disordered stretches follow at residues 314–358 (ANPA…RAGM) and 373–419 (SAST…SELS). Composition is skewed to polar residues over residues 317 to 331 (ASVSTVPSKLPTSSK), 339 to 355 (NALTNPAPSKLPINSTR), and 373 to 382 (SASTVPTDGS). The segment covering 388–403 (TPAAPTPAGATGGSSA) has biased composition (low complexity). Phosphoserine is present on Ser408. The pLxIS motif signature appears at 439-442 (LAIS). Ser442 carries the post-translational modification Phosphoserine; by TBK1. Residues 455–460 (PEENEY) are interaction with TRAF6. Glycyl lysine isopeptide (Lys-Gly) (interchain with G-Cter in ubiquitin) cross-links involve residues Lys461 and Lys500. Lys461 participates in a covalent cross-link: (Microbial infection) Glycyl lysine isopeptide (Lys-Gly) (interchain with G-Cter in UFM1). The tract at residues 476–507 (IQLLEGNPGPPADPDGGPRPQADRKFQEREVP) is disordered. Positions 496-507 (QADRKFQEREVP) are enriched in basic and acidic residues. A helical transmembrane segment spans residues 514–534 (GALWLQVAVTGVLVVTLLVVL). Residues 535 to 540 (YRRRLH) lie on the Mitochondrial intermembrane side of the membrane.

As to quaternary structure, self-associates and polymerizes (via CARD domains) to form 400 nM long three-stranded helical filaments on mitochondria, filament nucleation requires interaction with RIGI whose CARD domains act as a template for filament assembly. Interacts with RIGI, IFIH1/MDA5, TRAF2, TRAF6 and C1QBP. May interact with FADD, RIPK1, CHUK and IKBKB. Interacts (when phosphorylated) with IRF3; following activation and phosphorylation on the pLxIS motif by TBK1, recruits IRF3. Interacts with NLRX1. Interaction with NLRX1 requires the CARD domain. Interacts with PSMA7. Interacts with TRAFD1. Interacts (via C-terminus) with PCBP2 in a complex containing MAVS/IPS1, PCBP2 and ITCH. Interacts with CYLD. Interacts with SRC. Interacts with DHX58/LGP2 and IKBKE. Interacts with STING1. Interacts with IFIT3 (via N-terminus). Interacts with TBK1 only in the presence of IFIT3. Interacts with TTLL12; the interaction prevents MAVS binding to TBK1 and IKBKE. Interacts with MUL1. Interacts with ANKRD17. Interacts with NDFIP1. Interacts with SMURF1; the interaction is mediated by NDFIP1 and leads to MAVS ubiquitination and degradation. Interacts with UBXN1; this interaction inhibits MAVS-mediated antiviral pathway. Interacts (via C-terminus) with GPATCH3; the interaction is markedly increased upon viral infection. Directly interacts (via CARD domain) with ATG5 and ATG12, either as ATG5 and ATG12 monomers or as ATG12-ATG5 conjugates. Interacts with DHX33 (via the helicase C-terminal domain). Interacts with DDX3X (via C-terminus); this interaction occurs rapidly, but transiently after Sendai virus infection. The interaction with DDX3X potentiates MAVS-mediated IFNB induction. Conversely inhibition of this interaction, for instance by HCV core protein, prevents MAVS-mediated IFNB induction. Transiently interacts with TRAF3 early during Sendai virus infection. Interacts with CLPB; the interaction is enhanced by Sendai virus infection. Interacts with TRAF3IP3. Interacts with TOMM70; the interaction is enhanced by Sendai virus infection. Interacts with ZNFX1. Interacts with N4BP3; this interaction promotes the polyubiquitination of MAVS. Interacts with TAX1BP1; this interaction induces MAVS polyubiquitination. Interacts with NLRP3; promoting NLRP3 recruitment to mitochondria and activation of the NLRP3 inflammasome. Interacts with ECSIT; this interaction bridges RIGI to the MAVS complex at the mitochondrion. Interacts with UBL7; this interaction promotes MAVS 'Lys-27'-linked ubiquitination leading to type I interferon production. Interacts (via transmembrane domain) with SMIM30/MAVI1 (via transmembrane domain); the interaction disrupts MAVS interaction with RIGI and inhibits MAVS aggregation, resulting in the repression of type I interferon signaling and innate immune responses. (Microbial infection) Interacts with hepatitis C virus (HCV) NS3/4A protease; this interaction leads to MAVS cleavage, thereby preventing the establishment of an antiviral state. In terms of assembly, (Microbial infection) Interacts with hepatitis GB virus B NS3/4A protease; this interaction leads to MAVS cleavage. As to quaternary structure, (Microbial infection) Interacts with human respiratory syncytial virus/HRSV protein NS1; this interaction disrupts MAVS binding to RIGI. (Microbial infection) Interacts with Andes virus Nnon-structural protein NS-S; this interaction may reduce MAVS ubiquitination and leads to inhibition of MAVS-induced type-I IFN signaling pathway. In terms of assembly, (Microbial infection) Interacts with Seneca Valley virus protease 3C; this interaction allows the cleavage of MAVS and subsequent suppression of host innate immunity. As to quaternary structure, (Microbial infection) Interacts with SARS-CoV virus protein ORF9b; this interaction mediates MAVS proteasomal degradation. (Microbial infection) Interacts with SARS-CoV-2 virus protein M; this interaction impairs MAVS self-association and its recruitment of downstream components. In terms of assembly, (Microbial infection) Interacts with foot-and-mouth disease virus protein VP1; this interaction competes with TRAF3 interaction to MAVS leading to suppression of host innate immunity. As to quaternary structure, (Microbial infection) Interacts with Epstein-Barr virus protein BILF1; this interaction mediates MAVS routing from mitochondria to lysosomes. In terms of processing, following activation, phosphorylated by TBK1 at Ser-442 in the pLxIS motif. The phosphorylated pLxIS motif constitutes an IRF3-binding motif, leading to recruitment of the transcription factor IRF3 to induce type-I interferons and other cytokines. Post-translationally, ubiquitinated. Undergoes 'Lys-48'-linked polyubiquitination catalyzed by ITCH; ITCH-dependent polyubiquitination is mediated by the interaction with PCBP2 and leads to MAVS/IPS1 proteasomal degradation. Ubiquitinated by RNF125, leading to its degradation by the proteasome. Undergoes 'Lys-48'-linked ubiquitination catalyzed by SMURF1. Undergoes 'Lys-48'-linked ubiquitination catalyzed by MARCHF5 at Lys-7 and Lys-500, leading to proteasomal degradation. Ubiquitinated via 'Lys-63'-linked ubiquitination at Lys-10, Lys-311 and Lys-461 by UBE2N and TRIM31, promoting MAVS polymerization and formation of three-stranded helical filaments on mitochondria. Undergoes 'Lys-63'-linked ubiquitination leading to enhanced interaction between MAVS and TRAF2. Undergoes 'Lys-27'-linked ubiquitination by TRIM21 leading to enhanced interaction between MAVS and TBK1. Deubiquitinated by USP10 leading to attenuation of RIGI-mediated MAVS aggregation and production of type I interferon. Undergoes 'Lys-48'-linked polyubiquitination catalyzed by RNF115 leading to its degradation. Palmitoylated by ZHDDC4. Palmitoylation promotes MAVS stabilization and activation by inhibiting 'Lys-48'- but facilitating 'Lys-63'-linked ubiquitination. In terms of processing, proteolytically cleaved by apoptotic caspases during apoptosis, leading to its inactivation. Cleavage by CASP3 during virus-induced apoptosis inactivates it, preventing cytokine overproduction. Post-translationally, (Microbial infection) Cleaved and degraded by hepatitis A virus (HAV) protein 3ABC allowing the virus to disrupt the activation of host IRF3 through the MDA5 pathway. (Microbial infection) Cleaved by the protease 2A of coxsackievirus B3, poliovirus and enterovirus 71 allowing the virus to disrupt the host type I interferon production. In terms of processing, (Microbial infection) Cleaved by Seneca Valley virus protease 3C allowing the virus to suppress interferon type-I production. Post-translationally, (Microbial infection) Cleaved by HCV protease NS3/4A, thereby preventing the establishment of an antiviral state. (Microbial infection) UFMylated by ULF1 in association with Epstein-Barr virus BILF1; leading to MAVS routing to the lysosome. Present in T-cells, monocytes, epithelial cells and hepatocytes (at protein level). Ubiquitously expressed, with highest levels in heart, skeletal muscle, liver, placenta and peripheral blood leukocytes.

Its subcellular location is the mitochondrion outer membrane. The protein resides in the mitochondrion. It is found in the peroxisome. Its function is as follows. Adapter required for innate immune defense against viruses. Acts downstream of DHX33, RIGI and IFIH1/MDA5, which detect intracellular dsRNA produced during viral replication, to coordinate pathways leading to the activation of NF-kappa-B, IRF3 and IRF7, and to the subsequent induction of antiviral cytokines such as IFNB and RANTES (CCL5). Peroxisomal and mitochondrial MAVS act sequentially to create an antiviral cellular state. Upon viral infection, peroxisomal MAVS induces the rapid interferon-independent expression of defense factors that provide short-term protection, whereas mitochondrial MAVS activates an interferon-dependent signaling pathway with delayed kinetics, which amplifies and stabilizes the antiviral response. May activate the same pathways following detection of extracellular dsRNA by TLR3. May protect cells from apoptosis. Involved in NLRP3 inflammasome activation by mediating NLRP3 recruitment to mitochondria. The protein is Mitochondrial antiviral-signaling protein of Homo sapiens (Human).